We begin with the raw amino-acid sequence, 546 residues long: Elongator complex protein 3 (546 aa).

In terms of domain architecture, Radical SAM core spans 81–371; that stretch reads RTASGIAVVA…YRVQRDIPMP (291 aa). Residues C98, C108, and C111 each contribute to the [4Fe-4S] cluster site. Acetyl-CoA is bound by residues K163, 473 to 476, 496 to 498, and Y529; these read ELHV and FGM. Positions 395 to 546 constitute an N-acetyltransferase domain; it reads TQCRDVRTRE…EGPYMVKRLQ (152 aa).

The protein belongs to the ELP3 family. Component of the elongator complex. It depends on [4Fe-4S] cluster as a cofactor.

The protein localises to the cytoplasm. The protein resides in the nucleus. It carries out the reaction uridine(34) in tRNA + acetyl-CoA + S-adenosyl-L-methionine + H2O = 5-(carboxymethyl)uridine(34) in tRNA + 5'-deoxyadenosine + L-methionine + CoA + 2 H(+). It participates in tRNA modification; 5-methoxycarbonylmethyl-2-thiouridine-tRNA biosynthesis. Catalytic tRNA acetyltransferase subunit of the elongator complex which is required for multiple tRNA modifications, including mcm5U (5-methoxycarbonylmethyl uridine), mcm5s2U (5-methoxycarbonylmethyl-2-thiouridine), and ncm5U (5-carbamoylmethyl uridine). In the elongator complex, acts as a tRNA uridine(34) acetyltransferase by mediating formation of carboxymethyluridine in the wobble base at position 34 in tRNAs. This is Elongator complex protein 3 from Gallus gallus (Chicken).